The chain runs to 2273 residues: Linear gramicidin synthase subunit A (2273 aa).

Residues 1-144 are GART; it reads MRILFLTTFM…AIEELFIREW (144 aa). Carrier domains are found at residues 693-767 and 1724-1798; these read APTD…TEQK and APRT…TSEQ. An O-(pantetheine 4'-phosphoryl)serine mark is found at Ser728 and Ser1759.

This sequence belongs to the ATP-dependent AMP-binding enzyme family. In terms of assembly, large multienzyme complex composed of 4 subunits; LgrA, LgrB, LgrC and LgrD. It depends on pantetheine 4'-phosphate as a cofactor.

In terms of biological role, activates valine (or leucine, but much less frequently), and then glycine and catalyzes the formation of the peptide bond in the first step of peptide synthesis. This enzyme may also play a role in N-formylation of the first amino acid residue in the synthesized dipeptide. The sequence is that of Linear gramicidin synthase subunit A (lgrA) from Brevibacillus parabrevis.